Reading from the N-terminus, the 177-residue chain is Putative pre-16S rRNA nuclease (177 aa).

This sequence belongs to the YqgF nuclease family.

It localises to the cytoplasm. Its function is as follows. Could be a nuclease involved in processing of the 5'-end of pre-16S rRNA. The protein is Putative pre-16S rRNA nuclease of Psychrobacter sp. (strain PRwf-1).